Here is a 295-residue protein sequence, read N- to C-terminus: Acetylglutamate kinase (295 aa).

Substrate contacts are provided by residues 66-67 (GG), Arg88, and Asn193.

It belongs to the acetylglutamate kinase family. ArgB subfamily.

The protein resides in the cytoplasm. It catalyses the reaction N-acetyl-L-glutamate + ATP = N-acetyl-L-glutamyl 5-phosphate + ADP. The protein operates within amino-acid biosynthesis; L-arginine biosynthesis; N(2)-acetyl-L-ornithine from L-glutamate: step 2/4. Functionally, catalyzes the ATP-dependent phosphorylation of N-acetyl-L-glutamate. The polypeptide is Acetylglutamate kinase (Sinorhizobium fredii (strain NBRC 101917 / NGR234)).